A 313-amino-acid chain; its full sequence is Guanine nucleotide-binding protein-like 3-like protein (313 aa).

A compositionally biased stretch (basic residues) spans 1–14 (MGIKKKRQSKRLTT). The interval 1 to 41 (MGIKKKRQSKRLTTRKREGMLKRARANERKKRRMDRKMQAK) is disordered. Basic and acidic residues predominate over residues 15–27 (RKREGMLKRARAN). Residues 95-98 (SKSD), 178-185 (GNPGSGKN), and 212-215 (TLSS) contribute to the GTP site.

Belongs to the MMR1/HSR1 GTP-binding protein family.

It is found in the nucleus. It localises to the nucleolus. Required for normal processing of ribosomal pre-rRNA. Required for cell proliferation. Binds GTP. This chain is Guanine nucleotide-binding protein-like 3-like protein, found in Encephalitozoon cuniculi (strain GB-M1) (Microsporidian parasite).